The primary structure comprises 272 residues: NADH-cytochrome b5 reductase 3 (272 aa).

The 113-residue stretch at 11–123 (DIKYPLRLID…RGPNGLLVYQ (113 aa)) folds into the FAD-binding FR-type domain. Lysine 13 carries the N6-acetyllysine modification. At tyrosine 14 the chain carries Phosphotyrosine. Lysine 21 carries the post-translational modification N6-acetyllysine. Positions 63, 64, 65, 80, 82, and 84 each coordinate FAD. Position 91 is an N6-acetyllysine (lysine 91). FAD contacts are provided by lysine 97, methionine 98, serine 99, and threonine 156.

The protein belongs to the flavoprotein pyridine nucleotide cytochrome reductase family. Component of a complex composed of cytochrome b5, NADH-cytochrome b5 reductase (CYB5R3) and MTARC2. Interacts with MTLN; the interaction is required to maintain cellular lipid composition and leads to stimulation of mitochondrial respiratory complex I activity. FAD is required as a cofactor.

Its subcellular location is the endoplasmic reticulum membrane. The protein localises to the mitochondrion outer membrane. It carries out the reaction 2 Fe(III)-[cytochrome b5] + NADH = 2 Fe(II)-[cytochrome b5] + NAD(+) + H(+). In terms of biological role, catalyzes the reduction of two molecules of cytochrome b5 using NADH as the electron donor. This is NADH-cytochrome b5 reductase 3 (CYB5R3) from Sus scrofa (Pig).